The sequence spans 101 residues: uncharacterized protein (101 aa).

This is an uncharacterized protein from Enterobacteria phage T3 (Bacteriophage T3).